Reading from the N-terminus, the 367-residue chain is Leu/Ile/Val-binding protein BraC3 (367 aa).

An N-terminal signal peptide occupies residues 1-22; sequence MTLKTLTATLVASLAFAPLAHA.

The protein belongs to the leucine-binding protein family. In terms of assembly, the complex is composed of two ATP-binding proteins (BraF and BraG), two transmembrane proteins (BraD and BraE) and a solute-binding protein (BraC or BraC3).

The protein resides in the periplasm. Functionally, part of the ABC transporter complex BraDEFGC/C3 involved in transport of branched-chain amino acids Leu, Ile and Val (LIV). Essential for the development of bacteroids, the differentiated legume-symbiotic forms of this bacterium, and for the effective N(2) fixation by them. The polypeptide is Leu/Ile/Val-binding protein BraC3 (Rhizobium johnstonii (strain DSM 114642 / LMG 32736 / 3841) (Rhizobium leguminosarum bv. viciae)).